The chain runs to 446 residues: Glutamate--tRNA ligase 2 (446 aa).

The 'HIGH' region motif lies at 8–18 (PSPTGYLHIGN). The short motif at 239–243 (GLSKR) is the 'KMSKS' region element. ATP is bound at residue Lys-242.

It belongs to the class-I aminoacyl-tRNA synthetase family. Glutamate--tRNA ligase type 1 subfamily. In terms of assembly, monomer.

The protein resides in the cytoplasm. It carries out the reaction tRNA(Glu) + L-glutamate + ATP = L-glutamyl-tRNA(Glu) + AMP + diphosphate. Functionally, catalyzes the attachment of glutamate to tRNA(Glu) in a two-step reaction: glutamate is first activated by ATP to form Glu-AMP and then transferred to the acceptor end of tRNA(Glu). The sequence is that of Glutamate--tRNA ligase 2 from Methylobacterium radiotolerans (strain ATCC 27329 / DSM 1819 / JCM 2831 / NBRC 15690 / NCIMB 10815 / 0-1).